The following is an 80-amino-acid chain: Exodeoxyribonuclease 7 small subunit (80 aa).

Belongs to the XseB family. As to quaternary structure, heterooligomer composed of large and small subunits.

The protein resides in the cytoplasm. The enzyme catalyses Exonucleolytic cleavage in either 5'- to 3'- or 3'- to 5'-direction to yield nucleoside 5'-phosphates.. Functionally, bidirectionally degrades single-stranded DNA into large acid-insoluble oligonucleotides, which are then degraded further into small acid-soluble oligonucleotides. This Citrobacter koseri (strain ATCC BAA-895 / CDC 4225-83 / SGSC4696) protein is Exodeoxyribonuclease 7 small subunit.